We begin with the raw amino-acid sequence, 513 residues long: Zinc finger CCCH-type with G patch domain-containing protein (513 aa).

The C3H1-type zinc finger occupies 155-178 (PCSYYLEGECRFDEAKCRFSHGAL). Composition is skewed to acidic residues over residues 252 to 261 (DQDEDDELSS) and 273 to 283 (SDEAESDMDDL). The interval 252–283 (DQDEDDELSSEESTSSMRDASSDEAESDMDDL) is disordered. The 47-residue stretch at 312-358 (TRGIGSKLMEKMGYIHGTGLGSEGRGIVTPVSAQILPQGRSLDACME) folds into the G-patch domain. Disordered regions lie at residues 411–430 (PGES…NNEL) and 477–513 (QVQM…MFEF). The segment covering 477–495 (QVQMQSHKQELATLQAQER) has biased composition (polar residues). A compositionally biased stretch (basic and acidic residues) spans 496–513 (SLSKEQQTRKSKNKMFEF).

The protein resides in the nucleus. Its function is as follows. Transcription repressor. The sequence is that of Zinc finger CCCH-type with G patch domain-containing protein from Drosophila sechellia (Fruit fly).